An 806-amino-acid chain; its full sequence is Leucine--tRNA ligase (806 aa).

Positions 54-64 (SYPSGDLHMGH) match the 'HIGH' region motif. A 'KMSKS' region motif is present at residues 571–575 (KMSKS). An ATP-binding site is contributed by K574.

This sequence belongs to the class-I aminoacyl-tRNA synthetase family.

The protein localises to the cytoplasm. It catalyses the reaction tRNA(Leu) + L-leucine + ATP = L-leucyl-tRNA(Leu) + AMP + diphosphate. This chain is Leucine--tRNA ligase, found in Tropheryma whipplei (strain Twist) (Whipple's bacillus).